We begin with the raw amino-acid sequence, 680 residues long: Calcium-binding and coiled-coil domain-containing protein 1 (680 aa).

Residues Met1 to Val30 are p300 KIX-binding. The segment at Met1 to Ala190 is N-terminal AD (CTNNB1 binding site). A Phosphoserine modification is found at Ser4. Positions Ser45–Asp125 are interaction with GATA1. Coiled-coil stretches lie at residues Lys145 to Leu205, Glu232 to Glu339, and Gln417 to Lys514. The interval Arg501–Ala680 is C-terminal AD (CTNNB1 binding site); interaction with CCAR1. The tract at residues Ala511 to Val606 is disordered. A UBZ1-type zinc finger spans residues Trp654–His679. Positions 657, 660, 675, and 679 each coordinate Zn(2+).

The protein belongs to the CALCOCO family. As to quaternary structure, part of a calphoglin complex consisting of CALCOCO1, PPA1 and PGM. Interacts with the bHLH-PAS domains of GRIP1, AHR and ARNT. Interacts with CTNNB1 via both its N- and C-terminal regions. Interacts with EP300. Interacts with CCAR1 (via N-terminus) and GATA1.

The protein localises to the cytoplasm. It localises to the nucleus. Functions as a coactivator for aryl hydrocarbon and nuclear receptors (NR). Recruited to promoters through its contact with the N-terminal basic helix-loop-helix-Per-Arnt-Sim (PAS) domain of transcription factors or coactivators, such as NCOA2. During ER-activation acts synergistically in combination with other NCOA2-binding proteins, such as EP300, CREBBP and CARM1. Involved in the transcriptional activation of target genes in the Wnt/CTNNB1 pathway. Functions as a secondary coactivator in LEF1-mediated transcriptional activation via its interaction with CTNNB1. Coactivator function for nuclear receptors and LEF1/CTNNB1 involves differential utilization of two different activation regions. In association with CCAR1 enhances GATA1- and MED1-mediated transcriptional activation from the gamma-globin promoter during erythroid differentiation of K562 erythroleukemia cells. Functionally, seems to enhance inorganic pyrophosphatase thus activating phosphogluomutase (PMG). Probably functions as a component of the calphoglin complex, which is involved in linking cellular metabolism (phosphate and glucose metabolism) with other core functions including protein synthesis and degradation, calcium signaling and cell growth. This is Calcium-binding and coiled-coil domain-containing protein 1 (CALCOCO1) from Bos taurus (Bovine).